The primary structure comprises 442 residues: Mannosylglycerate hydrolase (442 aa).

Substrate-binding positions include Y38, 42-45, Y90, Q116, and G176; that span reads WSWD. Residue D178 is the Proton donor of the active site. Substrate contacts are provided by residues R213 and 369–370; that span reads YW. The Proton acceptor role is filled by E413.

It belongs to the glycosyl hydrolase 63 family. In terms of assembly, homodimer in solution.

The enzyme catalyses (2R)-2-O-(alpha-D-mannosyl)-glycerate + H2O = D-mannose + (R)-glycerate. The catalysed reaction is (2R)-2-O-(alpha-D-glucopyranosyl)-glycerate + H2O = (R)-glycerate + D-glucose. With respect to regulation, activity is not stimulated by divalent cations and not affected in the presence of EDTA. Hydrolase that catalyzes the hydrolysis of mannosylglycerate (MG), a solute produced in response to osmotic stress in thermophiles, into mannose and glycerate. Can also hydrolyze glucosylglycerate (GG) to glucose and glycerate, with similar catalytic efficiency. Is highly specific for MG and GG, and cannot use mannosylglyceramide (MGA), glucosylglycerol, mannosylglucosylglycerate (MGG), glucosylglucosylglycerate (GGG) or trehalose as substrates. The sequence is that of Mannosylglycerate hydrolase from Rubrobacter radiotolerans (Arthrobacter radiotolerans).